The primary structure comprises 1252 residues: Elongator complex protein 1 (1252 aa).

Positions 814-1252 (VDVNDLYNVA…MMDWQHEILQ (439 aa)) are mediates dimerization. Serine 1094 is subject to Phosphoserine. The segment at 1097–1116 (SSQYSGTSRRTGKTFRSSKN) is disordered. Positions 1106–1116 (RTGKTFRSSKN) are enriched in basic residues. Positions 1111–1129 (FRSSKNRRKHERKLFSLKP) are required for binding to tRNA.

Belongs to the ELP1/IKA1 family. As to quaternary structure, homodimer. Component of the elongator complex composed of Elp1, Elp2, Elp3, Elp4, Elp5 and Elp6. The elongator complex associates with and stabilizes microtubules; efficient interaction requires the full complex.

The protein localises to the cytoplasm. It localises to the nucleus. The protein resides in the cytoskeleton. It is found in the spindle. It participates in tRNA modification; 5-methoxycarbonylmethyl-2-thiouridine-tRNA biosynthesis. Its function is as follows. Component of the elongator complex, which is required for multiple tRNA modifications, including mcm5U (5-methoxycarbonylmethyl uridine), mcm5s2U (5-methoxycarbonylmethyl-2-thiouridine), and ncm5U (5-carbamoylmethyl uridine). The elongator complex catalyzes formation of carboxymethyluridine in the wobble base at position 34 in tRNAs. ELP1 binds to tRNA, mediating interaction of the elongator complex with tRNA. Binding by the elongator complex stabilizes microtubules and promotes their growth. This induces central spindle asymmetry, promoting polarized signaling endosome trafficking during asymmetric cell division and cell fate assignation of sensory organ precursor cells. Involved in protein synthesis-dependent long-term memory formation, probably as part of the elongator complex. This chain is Elongator complex protein 1, found in Drosophila melanogaster (Fruit fly).